Consider the following 296-residue polypeptide: Protein FAM110A (296 aa).

Disordered regions lie at residues 61–97 (NTRQ…PCSG) and 117–192 (PVSP…KSDL). Pro residues-rich tracts occupy residues 139–148 (PATPPRPPPS) and 161–170 (PASPARPYPS).

This sequence belongs to the FAM110 family. May interact with CSPP1.

The protein resides in the cytoplasm. It localises to the cytoskeleton. Its subcellular location is the microtubule organizing center. It is found in the centrosome. The protein localises to the spindle pole. The protein is Protein FAM110A (Fam110a) of Mus musculus (Mouse).